The sequence spans 83 residues: Cytochrome b559 subunit alpha (83 aa).

A helical membrane pass occupies residues 21-35 (VIHSITIPSLFIAGW). Position 23 (His-23) interacts with heme.

Belongs to the PsbE/PsbF family. In terms of assembly, heterodimer of an alpha subunit and a beta subunit. PSII is composed of 1 copy each of membrane proteins PsbA, PsbB, PsbC, PsbD, PsbE, PsbF, PsbH, PsbI, PsbJ, PsbK, PsbL, PsbM, PsbT, PsbX, PsbY, PsbZ, Psb30/Ycf12, at least 3 peripheral proteins of the oxygen-evolving complex and a large number of cofactors. It forms dimeric complexes. The cofactor is heme b.

The protein resides in the plastid. It localises to the chloroplast thylakoid membrane. Its function is as follows. This b-type cytochrome is tightly associated with the reaction center of photosystem II (PSII). PSII is a light-driven water:plastoquinone oxidoreductase that uses light energy to abstract electrons from H(2)O, generating O(2) and a proton gradient subsequently used for ATP formation. It consists of a core antenna complex that captures photons, and an electron transfer chain that converts photonic excitation into a charge separation. In Citrus sinensis (Sweet orange), this protein is Cytochrome b559 subunit alpha.